The chain runs to 925 residues: ETO1-like protein 2 (925 aa).

Positions 207 to 307 constitute a BTB domain; the sequence is SDISFCVGSE…ECEARLAASV (101 aa). The TPR 1 repeat unit spans residues 409-442; that stretch reads ALSLHQMGCVLFERKDYKAAQFHFRLASSLGHVY. A coiled-coil region spans residues 509–533; the sequence is KYRAVMKFEQKQIKEAFQEIDRLIQ. TPR repeat units follow at residues 538-571, 664-697, 738-771, 773-803, 834-867, and 869-900; these read PECL…EPNY, AERL…QRSF, GQAL…KHIR, RQGL…SCSK, TYPY…RPEL, and TLHL…DPNH.

This sequence belongs to the ETO1 family. In terms of assembly, interacts with the C-terminal domain of ACS5. In terms of tissue distribution, constitutively expressed in green and etiolated seedlings.

The protein operates within protein modification; protein ubiquitination. In terms of biological role, potential regulator of the ethylene pathway, which acts by regulating the stability of 1-aminocyclopropane-1-carboxylate synthase (ACS) enzymes. May act as a substrate-specific adapter that connects ACS enzymes, such as ACS5, to ubiquitin ligase complexes, leading to proteasomal degradation of ACS enzymes. The sequence is that of ETO1-like protein 2 (EOL2) from Arabidopsis thaliana (Mouse-ear cress).